The following is a 442-amino-acid chain: Elongation factor 1-alpha (442 aa).

One can recognise a tr-type G domain in the interval 5–228 (KTHINIVVIG…DSVTPPERPV (224 aa)). The segment at 14 to 21 (GHVDSGKS) is G1. Residue 14–21 (GHVDSGKS) participates in GTP binding. The segment at 70 to 74 (GITID) is G2. A G3 region spans residues 91 to 94 (DAPG). GTP-binding positions include 91–95 (DAPGH) and 153–156 (NKMD). The G4 stretch occupies residues 153–156 (NKMD). Residues 192 to 194 (SGF) form a G5 region.

The protein belongs to the TRAFAC class translation factor GTPase superfamily. Classic translation factor GTPase family. EF-Tu/EF-1A subfamily.

It localises to the cytoplasm. Functionally, this protein promotes the GTP-dependent binding of aminoacyl-tRNA to the A-site of ribosomes during protein biosynthesis. This Entamoeba histolytica (strain ATCC 30459 / HM-1:IMSS / ABRM) protein is Elongation factor 1-alpha.